A 144-amino-acid chain; its full sequence is Large ribosomal subunit protein uL16 (144 aa).

Belongs to the universal ribosomal protein uL16 family. As to quaternary structure, part of the 50S ribosomal subunit.

In terms of biological role, binds 23S rRNA and is also seen to make contacts with the A and possibly P site tRNAs. This is Large ribosomal subunit protein uL16 from Bacillus anthracis (strain A0248).